Consider the following 188-residue polypeptide: MEARFTRGKSALLERALVRPRTEVSLSAFALLFSELVQHCQSRVFSVAELQARLAALGRQVGARVLDALVAREKGARRETKVLGALLFVKGAVWKALFGKEADKLEQANDDARTFYIIEREPLINTYISVPKENSTLNCASFTAGIVEAVLTHSGFPAKVTAHWHKGTTLMIKFEEAVIARDRALEGR.

Serine 10 is subject to Phosphoserine.

Belongs to the TRAPP small subunits family. BET3 subfamily. Component of the multisubunit TRAPP (transport protein particle) complex, which includes at least TRAPPC2, TRAPPC2L, TRAPPC3, TRAPPC3L, TRAPPC4, TRAPPC5, TRAPPC8, TRAPPC9, TRAPPC10, TRAPPC11 and TRAPPC12.

It localises to the golgi apparatus. The protein localises to the cis-Golgi network. The protein resides in the endoplasmic reticulum. Its function is as follows. May play a role in vesicular transport from endoplasmic reticulum to Golgi. This is Trafficking protein particle complex subunit 5 (Trappc5) from Mus musculus (Mouse).